The chain runs to 583 residues: Phosphoglucomutase, cytoplasmic 1 (583 aa).

Residues R25 and S124 each contribute to the alpha-D-glucose 1,6-bisphosphate site. The Phosphoserine intermediate role is filled by S124. Positions 124, 300, 302, and 304 each coordinate Mg(2+). A Phosphoserine modification is found at S124. Alpha-D-glucose 1,6-bisphosphate-binding residues include D304, R305, T368, E387, S389, and K400.

The protein belongs to the phosphohexose mutase family. In terms of assembly, monomer. It depends on Mg(2+) as a cofactor. Post-translationally, autophosphorylated. Mostly expressed in roots and coleoptiles, and, to a lower extent, in leaves, pollen and developing seeds.

It is found in the cytoplasm. It carries out the reaction alpha-D-glucose 1-phosphate = alpha-D-glucose 6-phosphate. The enzyme catalyses O-phospho-L-seryl-[protein] + alpha-D-glucose 1-phosphate = alpha-D-glucose 1,6-bisphosphate + L-seryl-[protein]. It catalyses the reaction alpha-D-glucose 1,6-bisphosphate + L-seryl-[protein] = O-phospho-L-seryl-[protein] + alpha-D-glucose 6-phosphate. Functionally, catalyzes the reversible isomerization of alpha-D-glucose 1-phosphate to alpha-D-glucose 6-phosphate. The mechanism proceeds via the intermediate compound alpha-D-glucose 1,6-bisphosphate. This enzyme participates in both the breakdown and synthesis of glucose. The polypeptide is Phosphoglucomutase, cytoplasmic 1 (Zea mays (Maize)).